The following is a 479-amino-acid chain: Anaerobic nitric oxide reductase flavorubredoxin (479 aa).

The segment at 30–210 (LRGSSYNSYL…PFSRLVTPKI (181 aa)) is zinc metallo-hydrolase. Fe cation is bound by residues His79, Glu81, Asp83, His147, Asp166, and His227. The Flavodoxin-like domain maps to 254–393 (ITIFYDTMSN…LCREHGREIA (140 aa)). FMN-binding positions include 260–264 (TMSNN) and 342–369 (AFGS…EMSL). Residues 423 to 474 (GPRMQCSVCQWIYDPAKGEPMQDVAPGTPWSEVPDNFLCPECSLGKDVFDEL) form the Rubredoxin-like domain. The Fe cation site is built by Cys428, Cys431, Cys461, and Cys464.

The protein in the N-terminal section; belongs to the zinc metallo-hydrolase group 3 family. In terms of assembly, homotetramer. Fe cation serves as cofactor. Requires FMN as cofactor.

Its subcellular location is the cytoplasm. The protein operates within nitrogen metabolism; nitric oxide reduction. Anaerobic nitric oxide reductase; uses NADH to detoxify nitric oxide (NO), protecting several 4Fe-4S NO-sensitive enzymes. Has at least 2 reductase partners, only one of which (NorW, flavorubredoxin reductase) has been identified. NO probably binds to the di-iron center; electrons enter from the NorW at rubredoxin and are transferred sequentially to the FMN center and the di-iron center. Also able to function as an aerobic oxygen reductase. The chain is Anaerobic nitric oxide reductase flavorubredoxin from Escherichia coli O6:H1 (strain CFT073 / ATCC 700928 / UPEC).